A 452-amino-acid chain; its full sequence is tRNA modification GTPase MnmE (452 aa).

(6S)-5-formyl-5,6,7,8-tetrahydrofolate contacts are provided by arginine 21, glutamate 82, and arginine 121. Residues glycine 214–leucine 372 enclose the TrmE-type G domain. Asparagine 224 lines the K(+) pocket. Residues asparagine 224–serine 229, threonine 243–threonine 249, aspartate 268–glycine 271, and serine 353–arginine 355 contribute to the GTP site. Serine 228 contributes to the Mg(2+) binding site. 3 residues coordinate K(+): threonine 243, isoleucine 245, and threonine 248. Threonine 249 is a binding site for Mg(2+). Lysine 452 lines the (6S)-5-formyl-5,6,7,8-tetrahydrofolate pocket.

Belongs to the TRAFAC class TrmE-Era-EngA-EngB-Septin-like GTPase superfamily. TrmE GTPase family. Homodimer. Heterotetramer of two MnmE and two MnmG subunits. K(+) is required as a cofactor.

It localises to the cytoplasm. In terms of biological role, exhibits a very high intrinsic GTPase hydrolysis rate. Involved in the addition of a carboxymethylaminomethyl (cmnm) group at the wobble position (U34) of certain tRNAs, forming tRNA-cmnm(5)s(2)U34. The protein is tRNA modification GTPase MnmE of Chloroflexus aurantiacus (strain ATCC 29366 / DSM 635 / J-10-fl).